We begin with the raw amino-acid sequence, 149 residues long: 3-dehydroquinate dehydratase (149 aa).

Tyr-26 serves as the catalytic Proton acceptor. Residues Asn-77, His-83, and Asp-90 each contribute to the substrate site. His-103 functions as the Proton donor in the catalytic mechanism. Residues 104–105 (LS) and Arg-114 contribute to the substrate site.

It belongs to the type-II 3-dehydroquinase family. In terms of assembly, homododecamer.

It catalyses the reaction 3-dehydroquinate = 3-dehydroshikimate + H2O. It functions in the pathway metabolic intermediate biosynthesis; chorismate biosynthesis; chorismate from D-erythrose 4-phosphate and phosphoenolpyruvate: step 3/7. In terms of biological role, catalyzes a trans-dehydration via an enolate intermediate. The protein is 3-dehydroquinate dehydratase of Haemophilus influenzae (strain 86-028NP).